Here is a 179-residue protein sequence, read N- to C-terminus: MAKLHDKYQETVVAELAKKFGYSSVMQVPRIEKITLNMGVGEAVADKKVMEHALRDMTAIAGQKPIVTVARKSVAGFKIREGYPIGCKVTLRGERMWEFLERLVDIAIPRIRDFRGLSAKAFDGRGNYAMGVREQIIFPEIDYDKIDKIRGMDIVITTTAKNDEEGRALLDAFNFPFKK.

It belongs to the universal ribosomal protein uL5 family. As to quaternary structure, part of the 50S ribosomal subunit; part of the 5S rRNA/L5/L18/L25 subcomplex. Contacts the 5S rRNA and the P site tRNA. Forms a bridge to the 30S subunit in the 70S ribosome.

Its function is as follows. This is one of the proteins that bind and probably mediate the attachment of the 5S RNA into the large ribosomal subunit, where it forms part of the central protuberance. In the 70S ribosome it contacts protein S13 of the 30S subunit (bridge B1b), connecting the 2 subunits; this bridge is implicated in subunit movement. Contacts the P site tRNA; the 5S rRNA and some of its associated proteins might help stabilize positioning of ribosome-bound tRNAs. The protein is Large ribosomal subunit protein uL5 of Shewanella frigidimarina (strain NCIMB 400).